We begin with the raw amino-acid sequence, 1001 residues long: UPF0182 protein Mjls_1469 (1001 aa).

7 consecutive transmembrane segments (helical) span residues 16–36 (VLIG…RFID), 61–81 (VVVF…GLAL), 112–132 (LFGF…AQSY), 174–194 (FVAT…FGGI), 209–229 (IQLV…YWLD), 258–278 (KLIL…AIVL), and 286–306 (IGVV…PLVV). Low complexity predominate over residues 900-929 (ATGPAPANLPDGQPAAQPPNGQQPAAQTPG). The interval 900–977 (ATGPAPANLP…MSGLQDAQRS (78 aa)) is disordered.

It belongs to the UPF0182 family.

The protein localises to the cell membrane. This Mycobacterium sp. (strain JLS) protein is UPF0182 protein Mjls_1469.